Consider the following 271-residue polypeptide: Small ribosomal subunit protein uS2 (271 aa).

The protein belongs to the universal ribosomal protein uS2 family.

In Wolbachia pipientis subsp. Culex pipiens (strain wPip), this protein is Small ribosomal subunit protein uS2.